Consider the following 532-residue polypeptide: Probable cytochrome c oxidase subunit 1 (532 aa).

8 consecutive transmembrane segments (helical) span residues 33 to 53 (IMYI…SLLF), 74 to 94 (VLIT…ALFG), 95 to 115 (GFGN…FPRL), 118 to 138 (ISFW…FVDG), 163 to 183 (MAIF…INLI), 200 to 220 (PLFV…MPVL), 252 to 272 (LFWF…FGIV), and 284 to 304 (IFGY…GFIV). H79 contacts Fe(II)-heme a. Residues H258 and Y262 each coordinate Cu cation. Residues H307 and H308 each coordinate Cu cation. Helical transmembrane passes span 318–338 (ALIY…IKIF) and 355–375 (MLFS…GIIL). H393 lines the heme a3 pocket. Transmembrane regions (helical) follow at residues 394 to 414 (FHYT…YYWF), 431 to 451 (FWIT…LGLA), and 473 to 493 (IGAG…FYTL). Residue H395 coordinates Fe(II)-heme a.

The protein belongs to the heme-copper respiratory oxidase family.

It localises to the cell membrane. The enzyme catalyses 4 Fe(II)-[cytochrome c] + O2 + 8 H(+)(in) = 4 Fe(III)-[cytochrome c] + 2 H2O + 4 H(+)(out). It participates in energy metabolism; oxidative phosphorylation. Functionally, cytochrome c oxidase is the component of the respiratory chain that catalyzes the reduction of oxygen to water. Subunits 1-3 form the functional core of the enzyme complex. CO I is the catalytic subunit of the enzyme. Electrons originating in cytochrome c are transferred via the copper A center of subunit 2 and heme A of subunit 1 to the bimetallic center formed by heme A3 and copper B. This is Probable cytochrome c oxidase subunit 1 (ctaD) from Rickettsia felis (strain ATCC VR-1525 / URRWXCal2) (Rickettsia azadi).